A 523-amino-acid chain; its full sequence is Sensory neuron membrane protein 1 (523 aa).

Over 1–11 (MQLPRELKYAA) the chain is Cytoplasmic. The helical transmembrane segment at 12-32 (IAGGVALFGLIFGWVLFPTIL) threads the bilayer. Over 33–458 (KSQLKKEMAL…HQLFIPKRVV (426 aa)) the chain is Extracellular. Residues asparagine 67 and asparagine 229 are each glycosylated (N-linked (GlcNAc...) asparagine). Disulfide bonds link cysteine 268-cysteine 333, cysteine 297-cysteine 352, and cysteine 335-cysteine 341. Asparagine 440 carries N-linked (GlcNAc...) asparagine glycosylation. Residues 459–479 (GVLRWWMVSFGSLGAVIGIVF) form a helical membrane-spanning segment. Residues 480-523 (HFRDHIMRLAVSGDTKVSKVTPEEEEQKDISVIGQAQEPAKVNI) lie on the Cytoplasmic side of the membrane.

The protein belongs to the CD36 family.

The protein resides in the cell membrane. Plays an olfactory role that is not restricted to pheromone sensitivity. This Helicoverpa armigera (Cotton bollworm) protein is Sensory neuron membrane protein 1.